Reading from the N-terminus, the 310-residue chain is Membrane protein insertase YidC 2 (310 aa).

Residues 1 to 23 (MKKIYKRLLFSGLALSMLFFLSG) form the signal peptide. Residue cysteine 24 is the site of N-palmitoyl cysteine attachment. A lipid anchor (S-diacylglycerol cysteine) is attached at cysteine 24. Transmembrane regions (helical) follow at residues 34–54 (GEGWVYKFFAAPMGSVIQYLA), 57–77 (LGLGFGFAIIIVTVIVRLLIL), 136–156 (FGGLGCLPLLIQMPFFSALYI), 180–200 (IITVIIGILYLVQSWVSTLSV), and 220–240 (VMISIGAPAGGALYWLVSGIF). A disordered region spans residues 263–310 (EFKKNPPKPFKSNARKDITPQANNDKKLITSKKQKSNRNAGKQRHHKQ). Residues 276–290 (ARKDITPQANNDKKL) are compositionally biased toward basic and acidic residues. Over residues 291-310 (ITSKKQKSNRNAGKQRHHKQ) the composition is skewed to basic residues.

This sequence belongs to the OXA1/ALB3/YidC family. Type 2 subfamily.

The protein resides in the cell membrane. Its function is as follows. Required for the insertion and/or proper folding and/or complex formation of integral membrane proteins into the membrane. Involved in integration of membrane proteins that insert both dependently and independently of the Sec translocase complex, as well as at least some lipoproteins. Partially complements an E.coli yidC depletion experiment. The polypeptide is Membrane protein insertase YidC 2 (yidC2) (Streptococcus mutans serotype c (strain ATCC 700610 / UA159)).